Consider the following 66-residue polypeptide: UPF0370 protein CKO_00315 (66 aa).

Residues 4–24 (LAKYWWILVLVFLVGVLINVI) form a helical membrane-spanning segment. The interval 39 to 66 (KPELPPHRDFNDKWDDDDDWPKKDQPKK) is disordered. Residues 42 to 51 (LPPHRDFNDK) are compositionally biased toward basic and acidic residues.

The protein belongs to the UPF0370 family.

The protein localises to the cell membrane. In Citrobacter koseri (strain ATCC BAA-895 / CDC 4225-83 / SGSC4696), this protein is UPF0370 protein CKO_00315.